The following is a 363-amino-acid chain: Chorismate synthase (363 aa).

Residues arginine 48 and arginine 54 each coordinate NADP(+). FMN-binding positions include arginine 125–serine 127, asparagine 237–alanine 238, glycine 277, lysine 292–serine 296, and arginine 318.

Belongs to the chorismate synthase family. As to quaternary structure, homotetramer. Requires FMNH2 as cofactor.

It catalyses the reaction 5-O-(1-carboxyvinyl)-3-phosphoshikimate = chorismate + phosphate. It functions in the pathway metabolic intermediate biosynthesis; chorismate biosynthesis; chorismate from D-erythrose 4-phosphate and phosphoenolpyruvate: step 7/7. Its function is as follows. Catalyzes the anti-1,4-elimination of the C-3 phosphate and the C-6 proR hydrogen from 5-enolpyruvylshikimate-3-phosphate (EPSP) to yield chorismate, which is the branch point compound that serves as the starting substrate for the three terminal pathways of aromatic amino acid biosynthesis. This reaction introduces a second double bond into the aromatic ring system. The sequence is that of Chorismate synthase from Pseudomonas putida (strain W619).